The primary structure comprises 151 residues: Transmembrane protein 239 (151 aa).

Helical transmembrane passes span 61-81 (LWGLEGTLYLLLALMLCHALF), 85-105 (SYLLSSLWPVVAVMWSHLLPA), and 116-138 (ALLFAASFLLLFSTLLSLVGLLT).

The protein resides in the membrane. The chain is Transmembrane protein 239 (Tmem239) from Mus musculus (Mouse).